Reading from the N-terminus, the 153-residue chain is MRILEGNLIGQDKKFAIVAGRFNEFIVSKLIGGALDAFKRHGVEEENIDLAWVPGAFEIPLIAKKLAKSGKYAGVVCLGTVIRGATSHYDYVCGEVSKGIANVSLDTEVPVIFGIVTTENIEQAIERAGTKAGNKGFDAAMAAIEMANLLENI.

5-amino-6-(D-ribitylamino)uracil contacts are provided by residues F22, 56-58 (AFE), and 80-82 (TVI). 85-86 (AT) contributes to the (2S)-2-hydroxy-3-oxobutyl phosphate binding site. The active-site Proton donor is H88. A 5-amino-6-(D-ribitylamino)uracil-binding site is contributed by F113. R127 provides a ligand contact to (2S)-2-hydroxy-3-oxobutyl phosphate.

The protein belongs to the DMRL synthase family.

The enzyme catalyses (2S)-2-hydroxy-3-oxobutyl phosphate + 5-amino-6-(D-ribitylamino)uracil = 6,7-dimethyl-8-(1-D-ribityl)lumazine + phosphate + 2 H2O + H(+). Its pathway is cofactor biosynthesis; riboflavin biosynthesis; riboflavin from 2-hydroxy-3-oxobutyl phosphate and 5-amino-6-(D-ribitylamino)uracil: step 1/2. Its function is as follows. Catalyzes the formation of 6,7-dimethyl-8-ribityllumazine by condensation of 5-amino-6-(D-ribitylamino)uracil with 3,4-dihydroxy-2-butanone 4-phosphate. This is the penultimate step in the biosynthesis of riboflavin. This chain is 6,7-dimethyl-8-ribityllumazine synthase, found in Clostridium perfringens (strain 13 / Type A).